The primary structure comprises 259 residues: NH(3)-dependent NAD(+) synthetase (259 aa).

33 to 40 lines the ATP pocket; that stretch reads GLSGGIDS. Asp39 serves as a coordination point for Mg(2+). Residue Arg119 coordinates deamido-NAD(+). Thr139 is a binding site for ATP. Glu144 is a binding site for Mg(2+). Lys152 and Asp159 together coordinate deamido-NAD(+). Residues Lys168 and Ser190 each coordinate ATP. 249–250 is a binding site for deamido-NAD(+); that stretch reads HK.

It belongs to the NAD synthetase family. As to quaternary structure, homodimer.

The enzyme catalyses deamido-NAD(+) + NH4(+) + ATP = AMP + diphosphate + NAD(+) + H(+). The protein operates within cofactor biosynthesis; NAD(+) biosynthesis; NAD(+) from deamido-NAD(+) (ammonia route): step 1/1. Functionally, catalyzes the ATP-dependent amidation of deamido-NAD to form NAD. Uses ammonia as a nitrogen source. In Methanocaldococcus jannaschii (strain ATCC 43067 / DSM 2661 / JAL-1 / JCM 10045 / NBRC 100440) (Methanococcus jannaschii), this protein is NH(3)-dependent NAD(+) synthetase.